We begin with the raw amino-acid sequence, 317 residues long: Methionyl-tRNA formyltransferase (317 aa).

112-115 lines the (6S)-5,6,7,8-tetrahydrofolate pocket; the sequence is SLLP.

Belongs to the Fmt family.

It catalyses the reaction L-methionyl-tRNA(fMet) + (6R)-10-formyltetrahydrofolate = N-formyl-L-methionyl-tRNA(fMet) + (6S)-5,6,7,8-tetrahydrofolate + H(+). In terms of biological role, attaches a formyl group to the free amino group of methionyl-tRNA(fMet). The formyl group appears to play a dual role in the initiator identity of N-formylmethionyl-tRNA by promoting its recognition by IF2 and preventing the misappropriation of this tRNA by the elongation apparatus. The protein is Methionyl-tRNA formyltransferase of Histophilus somni (strain 2336) (Haemophilus somnus).